The primary structure comprises 242 residues: 2-C-methyl-D-erythritol 4-phosphate cytidylyltransferase (242 aa).

This sequence belongs to the IspD/TarI cytidylyltransferase family. IspD subfamily.

It catalyses the reaction 2-C-methyl-D-erythritol 4-phosphate + CTP + H(+) = 4-CDP-2-C-methyl-D-erythritol + diphosphate. It functions in the pathway isoprenoid biosynthesis; isopentenyl diphosphate biosynthesis via DXP pathway; isopentenyl diphosphate from 1-deoxy-D-xylulose 5-phosphate: step 2/6. Catalyzes the formation of 4-diphosphocytidyl-2-C-methyl-D-erythritol from CTP and 2-C-methyl-D-erythritol 4-phosphate (MEP). This chain is 2-C-methyl-D-erythritol 4-phosphate cytidylyltransferase, found in Halorhodospira halophila (strain DSM 244 / SL1) (Ectothiorhodospira halophila (strain DSM 244 / SL1)).